The primary structure comprises 125 residues: Small ribosomal subunit protein bS16 (125 aa).

The segment at 87–125 (EGKKKQALARQSASKKAVKEKTEESKGSEVDSETSTSAD) is disordered. The span at 103–115 (AVKEKTEESKGSE) shows a compositional bias: basic and acidic residues.

It belongs to the bacterial ribosomal protein bS16 family.

In Prochlorococcus marinus (strain MIT 9211), this protein is Small ribosomal subunit protein bS16.